Here is a 283-residue protein sequence, read N- to C-terminus: DegV domain-containing protein lmo2514 (283 aa).

Residues 5–282 (IAVVTDSTTY…EGALGLTWSI (278 aa)) form the DegV domain. Positions 63 and 96 each coordinate hexadecanoate.

Functionally, may bind long-chain fatty acids, such as palmitate, and may play a role in lipid transport or fatty acid metabolism. The chain is DegV domain-containing protein lmo2514 from Listeria monocytogenes serovar 1/2a (strain ATCC BAA-679 / EGD-e).